A 371-amino-acid chain; its full sequence is Cytochrome b (371 aa).

4 consecutive transmembrane segments (helical) span residues 25–45, 69–90, 105–125, and 170–190; these read FGSMLLSCLMLQVTTGFFLAV, WMMQNTHAIGASLFFICIYIHI, WMSGTTLLITLMATAFFGYIL, and FFALHFILPFIIISLSSLHIL. Residues His75 and His89 each contribute to the heme b site. Heme b is bound by residues His174 and His188. His193 is an a ubiquinone binding site. A run of 4 helical transmembrane segments spans residues 218-238, 280-300, 312-332, and 339-358; these read YKDLLLLTLLLTLLLLTTFFL, LGGALALVASILIIMTMPFTH, MSQLMFWTLISTFMTITWAAT, and FMMISQTASMIYFMFFISNP.

This sequence belongs to the cytochrome b family. As to quaternary structure, the cytochrome bc1 complex contains 3 respiratory subunits (MT-CYB, CYC1 and UQCRFS1), 2 core proteins (UQCRC1 and UQCRC2) and probably 6 low-molecular weight proteins. The cofactor is heme b.

It is found in the mitochondrion inner membrane. Functionally, component of the ubiquinol-cytochrome c reductase complex (complex III or cytochrome b-c1 complex) that is part of the mitochondrial respiratory chain. The b-c1 complex mediates electron transfer from ubiquinol to cytochrome c. Contributes to the generation of a proton gradient across the mitochondrial membrane that is then used for ATP synthesis. The polypeptide is Cytochrome b (MT-CYB) (Casarea dussumieri (Round Island keel-scaled boa)).